The primary structure comprises 1212 residues: Nucleolar protein 6 (1212 aa).

Disordered stretches follow at residues 1 to 72 and 1156 to 1212; these read MGKI…PVSI and KREQ…KSLS. A compositionally biased stretch (basic residues) spans 1197 to 1212; sequence LKRKSLIKSRPLKSLS.

The protein belongs to the NRAP family. As to quaternary structure, part of the small subunit (SSU) processome, composed of more than 70 proteins and the RNA chaperone small nucleolar RNA (snoRNA) U3.

It localises to the nucleus. The protein localises to the nucleolus. The protein resides in the chromosome. Its function is as follows. Part of the small subunit (SSU) processome, first precursor of the small eukaryotic ribosomal subunit. During the assembly of the SSU processome in the nucleolus, many ribosome biogenesis factors, an RNA chaperone and ribosomal proteins associate with the nascent pre-rRNA and work in concert to generate RNA folding, modifications, rearrangements and cleavage as well as targeted degradation of pre-ribosomal RNA by the RNA exosome. The polypeptide is Nucleolar protein 6 (Drosophila pseudoobscura pseudoobscura (Fruit fly)).